Reading from the N-terminus, the 119-residue chain is Large ribosomal subunit protein uL14m (119 aa).

The protein belongs to the universal ribosomal protein uL14 family.

It localises to the mitochondrion. The chain is Large ribosomal subunit protein uL14m from Tetrahymena pyriformis.